Consider the following 226-residue polypeptide: Deoxyribose-phosphate aldolase (226 aa).

Asp-96 serves as the catalytic Proton donor/acceptor. Residue Lys-157 is the Schiff-base intermediate with acetaldehyde of the active site. The Proton donor/acceptor role is filled by Lys-185.

This sequence belongs to the DeoC/FbaB aldolase family. DeoC type 1 subfamily.

The protein resides in the cytoplasm. The catalysed reaction is 2-deoxy-D-ribose 5-phosphate = D-glyceraldehyde 3-phosphate + acetaldehyde. The protein operates within carbohydrate degradation; 2-deoxy-D-ribose 1-phosphate degradation; D-glyceraldehyde 3-phosphate and acetaldehyde from 2-deoxy-alpha-D-ribose 1-phosphate: step 2/2. Its function is as follows. Catalyzes a reversible aldol reaction between acetaldehyde and D-glyceraldehyde 3-phosphate to generate 2-deoxy-D-ribose 5-phosphate. The protein is Deoxyribose-phosphate aldolase of Trichormus variabilis (strain ATCC 29413 / PCC 7937) (Anabaena variabilis).